The primary structure comprises 375 residues: S-adenosylmethionine:tRNA ribosyltransferase-isomerase (375 aa).

The protein belongs to the QueA family. As to quaternary structure, monomer.

It localises to the cytoplasm. It catalyses the reaction 7-aminomethyl-7-carbaguanosine(34) in tRNA + S-adenosyl-L-methionine = epoxyqueuosine(34) in tRNA + adenine + L-methionine + 2 H(+). It participates in tRNA modification; tRNA-queuosine biosynthesis. Its function is as follows. Transfers and isomerizes the ribose moiety from AdoMet to the 7-aminomethyl group of 7-deazaguanine (preQ1-tRNA) to give epoxyqueuosine (oQ-tRNA). The sequence is that of S-adenosylmethionine:tRNA ribosyltransferase-isomerase from Rickettsia typhi (strain ATCC VR-144 / Wilmington).